The sequence spans 274 residues: Large ribosomal subunit protein uL2 (274 aa).

Disordered stretches follow at residues 28–54 (KPYA…TRHI) and 221–274 (RGTA…RTKK). The span at 39–49 (KTGGRNNNGRI) shows a compositional bias: polar residues.

The protein belongs to the universal ribosomal protein uL2 family. In terms of assembly, part of the 50S ribosomal subunit. Forms a bridge to the 30S subunit in the 70S ribosome.

One of the primary rRNA binding proteins. Required for association of the 30S and 50S subunits to form the 70S ribosome, for tRNA binding and peptide bond formation. It has been suggested to have peptidyltransferase activity; this is somewhat controversial. Makes several contacts with the 16S rRNA in the 70S ribosome. The sequence is that of Large ribosomal subunit protein uL2 from Photorhabdus laumondii subsp. laumondii (strain DSM 15139 / CIP 105565 / TT01) (Photorhabdus luminescens subsp. laumondii).